Consider the following 189-residue polypeptide: Phosphoheptose isomerase (189 aa).

Positions 34-189 (LVDALGNGKK…CDLLEKRLFG (156 aa)) constitute an SIS domain. 49-51 (NGG) contributes to the substrate binding site. Zn(2+) contacts are provided by His58 and Glu62. Substrate-binding positions include Glu62, 91–92 (ND), 117–119 (STS), Ser122, and Gln169. Gln169 and His177 together coordinate Zn(2+).

Belongs to the SIS family. GmhA subfamily. Homotetramer. The cofactor is Zn(2+).

It localises to the cytoplasm. The catalysed reaction is 2 D-sedoheptulose 7-phosphate = D-glycero-alpha-D-manno-heptose 7-phosphate + D-glycero-beta-D-manno-heptose 7-phosphate. Its pathway is carbohydrate biosynthesis; D-glycero-D-manno-heptose 7-phosphate biosynthesis; D-glycero-alpha-D-manno-heptose 7-phosphate and D-glycero-beta-D-manno-heptose 7-phosphate from sedoheptulose 7-phosphate: step 1/1. Its function is as follows. Catalyzes the isomerization of sedoheptulose 7-phosphate in D-glycero-D-manno-heptose 7-phosphate. The protein is Phosphoheptose isomerase of Geotalea uraniireducens (strain Rf4) (Geobacter uraniireducens).